Consider the following 54-residue polypeptide: uncharacterized protein (54 aa).

Positions 1-54 (MSKKSTPMTKDAASRIQSSAAKSGGDVSSGSFASRAQSAAAINANNTSNSTGKK) are disordered. A compositionally biased stretch (low complexity) spans 28 to 54 (SSGSFASRAQSAAAINANNTSNSTGKK).

This is an uncharacterized protein from Dictyostelium discoideum (Social amoeba).